The sequence spans 1070 residues: RecBCD enzyme subunit RecC (1070 aa).

This sequence belongs to the RecC family. In terms of assembly, heterotrimer of RecB, RecC and RecD. All subunits contribute to DNA-binding.

Its function is as follows. A helicase/nuclease that prepares dsDNA breaks (DSB) for recombinational DNA repair. Binds to DSBs and unwinds DNA via a highly rapid and processive ATP-dependent bidirectional helicase activity. Unwinds dsDNA until it encounters a Chi (crossover hotspot instigator) sequence from the 3' direction. Cuts ssDNA a few nucleotides 3' to the Chi site. The properties and activities of the enzyme are changed at Chi. The Chi-altered holoenzyme produces a long 3'-ssDNA overhang and facilitates RecA-binding to the ssDNA for homologous DNA recombination and repair. Holoenzyme degrades any linearized DNA that is unable to undergo homologous recombination. In the holoenzyme this subunit recognizes the wild-type Chi sequence, and when added to isolated RecB increases its ATP-dependent helicase processivity. In Buchnera aphidicola subsp. Acyrthosiphon pisum (strain APS) (Acyrthosiphon pisum symbiotic bacterium), this protein is RecBCD enzyme subunit RecC.